Consider the following 194-residue polypeptide: Inner membrane-spanning protein YciB (194 aa).

5 consecutive transmembrane segments (helical) span residues 1–21 (MKLLFDFFPIILFFVVYKTTN), 49–69 (EKMHLFALVIVVILGGATILF), 77–97 (WKPSVVCWLLAVVFLIGGWVS), 120–140 (LNYSWVIFNTLLGALNLYVAY), and 150–170 (FKLFGMLGLSLVFALMQGVYI).

This sequence belongs to the YciB family.

It localises to the cell inner membrane. Functionally, plays a role in cell envelope biogenesis, maintenance of cell envelope integrity and membrane homeostasis. The protein is Inner membrane-spanning protein YciB of Hahella chejuensis (strain KCTC 2396).